Here is a 500-residue protein sequence, read N- to C-terminus: Zinc finger protein 689 (500 aa).

Residues 1 to 24 (MAPPSAPLLEQAPGEVGPTRRRGR) form a disordered region. In terms of domain architecture, KRAB spans 29–100 (LKFADVAVYF…AALDPQEYRR (72 aa)). Residues 110–144 (TRQKNEEKEVFPPKDVPRKGKRGRKPSKPRLIARQ) form a disordered region. Residues 112 to 127 (QKNEEKEVFPPKDVPR) show a composition bias toward basic and acidic residues. Residues 128–137 (KGKRGRKPSK) show a composition bias toward basic residues. The C2H2-type 1; degenerate zinc-finger motif lies at 149-171 (PICPDCGCTFPDLPALESHKCAQ). 10 consecutive C2H2-type zinc fingers follow at residues 177 to 199 (YPCP…RRAH), 205 to 227 (YVCD…QVIH), 233 to 255 (YHCP…RTTH), 261 to 283 (HQCP…QRTH), 289 to 311 (YTCL…QRIH), 317 to 339 (YPCP…RRVH), 345 to 367 (YACE…QLLH), 373 to 395 (YPCP…RSTH), 401 to 423 (HACD…RRVH), and 429 to 451 (YACD…QLLH). Lys-455 is covalently cross-linked (Glycyl lysine isopeptide (Lys-Gly) (interchain with G-Cter in SUMO2)). A C2H2-type 12 zinc finger spans residues 457–482 (FPCLECGRCFRQRWSLAVHKCCPNTH).

It belongs to the krueppel C2H2-type zinc-finger protein family.

It is found in the nucleus. Its function is as follows. May be involved in transcriptional regulation. The protein is Zinc finger protein 689 (Znf689) of Rattus norvegicus (Rat).